The following is a 104-amino-acid chain: L-rhamnose mutarotase (104 aa).

A substrate-binding site is contributed by Y18. Residue H22 is the Proton donor of the active site. Substrate is bound by residues Y41 and 76-77 (WW).

This sequence belongs to the rhamnose mutarotase family. As to quaternary structure, homodimer.

It localises to the cytoplasm. It catalyses the reaction alpha-L-rhamnose = beta-L-rhamnose. The protein operates within carbohydrate metabolism; L-rhamnose metabolism. Functionally, involved in the anomeric conversion of L-rhamnose. In Lachnoclostridium phytofermentans (strain ATCC 700394 / DSM 18823 / ISDg) (Clostridium phytofermentans), this protein is L-rhamnose mutarotase.